A 115-amino-acid chain; its full sequence is MSREMALVAYRNLLRSARVAFQGDMNTLFAARAEVRRNFESNRSLTAGSDELSKQLTHAEEVAKFLRENVVQGQAADDEGSYKLRIHEHTERGNNEDIRKGKGKSTLGRVKCCSS.

Residues 1 to 20 (MSREMALVAYRNLLRSARVA) constitute a mitochondrion transit peptide. Positions 90–100 (TERGNNEDIRK) are enriched in basic and acidic residues. The disordered stretch occupies residues 90 to 115 (TERGNNEDIRKGKGKSTLGRVKCCSS).

It belongs to the complex I LYR family. MZM1 subfamily. In terms of assembly, interacts with RIP1.

The protein resides in the mitochondrion matrix. Its function is as follows. Assembly factor required for Rieske Fe-S protein RIP1 incorporation into the cytochrome b-c1 (CIII) complex. Functions as a chaperone, binding to this subunit within the mitochondrial matrix and stabilizing it prior to its translocation and insertion into the late CIII dimeric intermediate within the mitochondrial inner membrane. Modulates the mitochondrial matrix zinc pool. This chain is Mitochondrial zinc maintenance protein 1, mitochondrial (MZM1), found in Phaeosphaeria nodorum (strain SN15 / ATCC MYA-4574 / FGSC 10173) (Glume blotch fungus).